The sequence spans 539 residues: Alpha-copaene synthase (539 aa).

Mg(2+)-binding residues include Asp290 and Asp294. Residues Asp290, Asp294, and Arg432 each contribute to the substrate site. The DDXXD motif signature appears at 290 to 294; that stretch reads DDTFD.

The protein belongs to the terpene synthase family. Monomer. It depends on Mg(2+) as a cofactor. The cofactor is Mn(2+).

The protein resides in the cytoplasm. The catalysed reaction is (2E,6E)-farnesyl diphosphate = alpha-copaene + diphosphate. It catalyses the reaction (2E,6E)-farnesyl diphosphate = (+)-germacrene D + diphosphate. It carries out the reaction (2E,6E)-farnesyl diphosphate = (-)-(E)-beta-caryophyllene + diphosphate. The enzyme catalyses (2E,6E)-farnesyl diphosphate = delta-cadinene + diphosphate. It functions in the pathway secondary metabolite biosynthesis; terpenoid biosynthesis. Its function is as follows. Converts farnesyl diphosphate to the bicyclic olefins alpha-copaene, (E)-beta-caryophyllene, and to the macrocyclic sesquiterpene germacrene D. Also mediates the biosynthesis of minor sesquiterpene hydrocarbons including delta-cadinene. Involved in indirect defense by producing volatile signals attracting natural enemies of herbivores. The protein is Alpha-copaene synthase of Zea mays (Maize).